Reading from the N-terminus, the 336-residue chain is uncharacterized protein (336 aa).

The protein belongs to the GppA/Ppx family.

This is an uncharacterized protein from Streptomyces coelicolor (strain ATCC BAA-471 / A3(2) / M145).